The following is a 161-amino-acid chain: MENFIGSHMIYTYENGWEYEIYIKNDHTIDYRIHSGMVAGRWVRDQEVNIVKLTEGVYKVSWTEPTGTDVSLNFMPNEKRMHGIIFFPKWVHEHPEITVCYQNDHIDLMKESREKYETYPKYVVPEFAEITFLKNEGVDNEEVISKAPYEGMTDDIRAGRL.

Substrate contacts are provided by Y11 and Y13. Y19 (proton donor) is an active-site residue. Substrate is bound at residue R41. The Proton acceptor role is filled by E64.

This sequence belongs to the PadC family. As to quaternary structure, homodimer.

It catalyses the reaction (E)-4-coumarate + H(+) = 4-vinylphenol + CO2. The enzyme catalyses (E)-cinnamate + H(+) = styrene + CO2. It carries out the reaction (E)-ferulate + H(+) = 2-methoxy-4-vinylphenol + CO2. In terms of biological role, involved in the decarboxylation and detoxification of phenolic derivatives. It is able to catalyze the decarboxylation of ferulic, p-coumaric and caffeic acids. The polypeptide is Phenolic acid decarboxylase PadC (padC) (Bacillus subtilis (strain 168)).